Reading from the N-terminus, the 379-residue chain is MSTTKRCYYETLEVERSADESTLKSAFRKLAMKWHPDRNPGDASSEIKFKEINEAYEVLKDGDKRAAYDRYGHAAFEQGMGGGGPGFGAGFASSFSDIFEDLFGMAGQRGRGTGRERGADLRYNMEITLEDAYKGKTAQIEIPVSVTCESCSGTGAKAGTKPKTCSTCGGAGRVRQAQGFFTLERTCPSCQGRGQIIEDPCPSCTGSGRVTKERTLSVNIPQGVEDGTRIRLAGEGEAGVRGGPPGDLYIFLSLASHAIFQRDGADLHCRVPISMVTAALGGEFEVPTIERGKTKVKVPSGTQTGRRFRIAGKGMPVLRSRQVGDMYVQVAVETPQNLTKKQQELLAEFEKLSSGATQPEAAGFFSKVKDFFGSRANTP.

The region spanning 7 to 72 is the J domain; sequence CYYETLEVER…DKRAAYDRYG (66 aa). The CR-type zinc finger occupies 135–213; sequence GKTAQIEIPV…CTGSGRVTKE (79 aa). 8 residues coordinate Zn(2+): C148, C151, C165, C168, C187, C190, C201, and C204. CXXCXGXG motif repeat units lie at residues 148 to 155, 165 to 172, 187 to 194, and 201 to 208; these read CESCSGTG, CSTCGGAG, CPSCQGRG, and CPSCTGSG.

The protein belongs to the DnaJ family. Homodimer. Zn(2+) serves as cofactor.

It localises to the cytoplasm. Functionally, participates actively in the response to hyperosmotic and heat shock by preventing the aggregation of stress-denatured proteins and by disaggregating proteins, also in an autonomous, DnaK-independent fashion. Unfolded proteins bind initially to DnaJ; upon interaction with the DnaJ-bound protein, DnaK hydrolyzes its bound ATP, resulting in the formation of a stable complex. GrpE releases ADP from DnaK; ATP binding to DnaK triggers the release of the substrate protein, thus completing the reaction cycle. Several rounds of ATP-dependent interactions between DnaJ, DnaK and GrpE are required for fully efficient folding. Also involved, together with DnaK and GrpE, in the DNA replication of plasmids through activation of initiation proteins. The polypeptide is Chaperone protein DnaJ (Rhodopseudomonas palustris (strain HaA2)).